A 398-amino-acid chain; its full sequence is Tryptophan synthase beta chain (398 aa).

Lys-87 carries the post-translational modification N6-(pyridoxal phosphate)lysine.

This sequence belongs to the TrpB family. Tetramer of two alpha and two beta chains. The cofactor is pyridoxal 5'-phosphate.

The enzyme catalyses (1S,2R)-1-C-(indol-3-yl)glycerol 3-phosphate + L-serine = D-glyceraldehyde 3-phosphate + L-tryptophan + H2O. It participates in amino-acid biosynthesis; L-tryptophan biosynthesis; L-tryptophan from chorismate: step 5/5. The beta subunit is responsible for the synthesis of L-tryptophan from indole and L-serine. In Blochmanniella floridana, this protein is Tryptophan synthase beta chain.